A 684-amino-acid chain; its full sequence is G-protein-signaling modulator 2 (684 aa).

The important for interaction with NUMA1; INSC and FRMPD1 stretch occupies residues 22–357 (ASCLELALEG…HLEISREVGD (336 aa)). TPR repeat units lie at residues 24-57 (CLEL…GTED), 62-95 (SAIY…ARTI), 102-135 (AKAS…SREL), 142-184 (ARAL…AVDF), 202-235 (GRAF…AKEF), 242-275 (RRAY…ARQL), 282-315 (AQSC…AQEL), and 322-355 (GRAC…SREV). Residue serine 132 is modified to Phosphoserine; by PKG. At serine 352 the chain carries Phosphoserine; by PKG. Phosphoserine occurs at positions 408 and 483. Threonine 486 carries the phosphothreonine modification. A GoLoco 1 domain is found at 489–511 (DEGFFDLLSRFQSNRMDDQRCCL). Serine 501 is subject to Phosphoserine; by PKC. Phosphoserine is present on residues serine 541 and serine 565. 3 consecutive GoLoco domains span residues 544-566 (TDEF…RASF), 594-616 (DEDF…RCAP), and 628-650 (DEDF…RVLL). Residue serine 607 is modified to Phosphoserine; by PKG. GDP contacts are provided by arginine 608, arginine 613, arginine 642, and arginine 647.

The protein belongs to the GPSM family. As to quaternary structure, interacts with the dynein-dynactin complex; this interaction is inhibited in a PLK1-dependent manner. Part of a spindle orientation complex at least composed of GNAI1, GPSM2 and NUMA1. Interacts with LLGL2. Interacts (via TPR repeat region) with INSC/inscuteable. Interacts (via TPR repeat region) with NUMA1 (via C-terminus); this interaction is direct, inhibited in a PLK1-dependent manner, prevents the binding of NUMA1 with SPAG5 and promotes spindle pole organization. INSC and NUMA1 compete for the same binding site, but INSC has higher affinity and can displace NUMA1 (in vitro). Interacts with GNAI2. Interacts (via GoLoco domains) with the GDP-bound form of GNAI1 and GNAI3; has much lower affinity for the GTP-bound form. Interaction with GDP-bound GNAI3 strongly enhances the affinity for NUMA1. Interacts (via TPR repeat region) with FRMPD1. INSC and FRMPD1 compete for the same binding site, but INSC has higher affinity and can displace FRMPD1 (in vitro). Interacts (via TPR repeat region) with FRMPD4. Identified in a complex with INSC and F2RL2/Par3. Interacts with TASOR. Ubiquitously expressed.

Its subcellular location is the cytoplasm. The protein localises to the cell cortex. It localises to the cytoskeleton. It is found in the spindle pole. The protein resides in the lateral cell membrane. Functionally, plays an important role in mitotic spindle pole organization via its interaction with NUMA1. Required for cortical dynein-dynactin complex recruitment during metaphase. Plays a role in metaphase spindle orientation. Also plays an important role in asymmetric cell divisions. Has guanine nucleotide dissociation inhibitor (GDI) activity towards G(i) alpha proteins, such as GNAI1 and GNAI3, and thereby regulates their activity. The chain is G-protein-signaling modulator 2 (GPSM2) from Homo sapiens (Human).